Consider the following 520-residue polypeptide: Amine oxidase [flavin-containing] B (520 aa).

Residues 1–489 lie on the Cytoplasmic side of the membrane; the sequence is MNSKCDVVVV…TFLERHLPSV (489 aa). At Lys52 the chain carries N6-acetyllysine. At Cys397 the chain carries S-8alpha-FAD cysteine. The helical; Anchor for type IV membrane protein transmembrane segment at 490-516 threads the bilayer; sequence PGLLRLIRLTTVVSAVALGFLAQKRGL. At 517–520 the chain is on the mitochondrial intermembrane side; the sequence is LLRI.

It belongs to the flavin monoamine oxidase family. Monomer, homo- or heterodimer (containing two subunits of similar size). Each subunit contains a covalently bound flavin. Enzymatically active as monomer. FAD serves as cofactor.

Its subcellular location is the mitochondrion outer membrane. The catalysed reaction is a secondary aliphatic amine + O2 + H2O = a primary amine + an aldehyde + H2O2. The enzyme catalyses (R)-adrenaline + O2 + H2O = (R)-3,4-dihydroxymandelaldehyde + methylamine + H2O2. It catalyses the reaction a primary methyl amine + O2 + H2O = an aldehyde + H2O2 + NH4(+). It carries out the reaction benzylamine + O2 + H2O = benzaldehyde + H2O2 + NH4(+). The catalysed reaction is dopamine + O2 + H2O = 3,4-dihydroxyphenylacetaldehyde + H2O2 + NH4(+). The enzyme catalyses tyramine + O2 + H2O = (4-hydroxyphenyl)acetaldehyde + H2O2 + NH4(+). It catalyses the reaction (R)-noradrenaline + O2 + H2O = (R)-3,4-dihydroxymandelaldehyde + H2O2 + NH4(+). It carries out the reaction 2-phenylethylamine + O2 + H2O = 2-phenylacetaldehyde + H2O2 + NH4(+). The catalysed reaction is N-acetylputrescine + O2 + H2O = 4-acetamidobutanal + H2O2 + NH4(+). Catalyzes the oxidative deamination of primary and some secondary amines such as neurotransmitters, and exogenous amines including the tertiary amine, neurotoxin 1-methyl-4-phenyl-1,2,3,6-tetrahydropyridine (MPTP), with concomitant reduction of oxygen to hydrogen peroxide and participates in the metabolism of neuroactive and vasoactive amines in the central nervous system and peripheral tissues. Preferentially degrades benzylamine and phenylethylamine. In Cavia porcellus (Guinea pig), this protein is Amine oxidase [flavin-containing] B.